The primary structure comprises 177 residues: Interleukin-1 receptor antagonist protein (177 aa).

The N-terminal stretch at 1–25 (MEVSRYLCSYLISFLLFLFHSETAC) is a signal peptide. Cys91 and Cys141 are oxidised to a cystine. N-linked (GlcNAc...) asparagine glycosylation occurs at Asn109.

This sequence belongs to the IL-1 family.

It is found in the secreted. Functionally, anti-inflammatory antagonist of interleukin-1 family of proinflammatory cytokines such as interleukin-1beta/IL1B and interleukin-1alpha/IL1A. Protects from immune dysregulation and uncontrolled systemic inflammation triggered by IL1 for a range of innate stimulatory agents such as pathogens. This is Interleukin-1 receptor antagonist protein (IL1RN) from Sus scrofa (Pig).